Here is a 347-residue protein sequence, read N- to C-terminus: Dihydroorotate dehydrogenase (quinone) (347 aa).

Residues 62–66 (AGLDK) and threonine 86 each bind FMN. Substrate is bound at residue lysine 66. 111–115 (NRMGF) lines the substrate pocket. Residues asparagine 142 and asparagine 175 each contribute to the FMN site. Asparagine 175 is a binding site for substrate. The Nucleophile role is filled by serine 178. Asparagine 180 contacts substrate. 2 residues coordinate FMN: lysine 220 and threonine 248. Residue 249-250 (NT) coordinates substrate. Residues glycine 271, glycine 300, and 321 to 322 (YS) each bind FMN.

This sequence belongs to the dihydroorotate dehydrogenase family. Type 2 subfamily. Monomer. The cofactor is FMN.

The protein resides in the cell membrane. The enzyme catalyses (S)-dihydroorotate + a quinone = orotate + a quinol. The protein operates within pyrimidine metabolism; UMP biosynthesis via de novo pathway; orotate from (S)-dihydroorotate (quinone route): step 1/1. In terms of biological role, catalyzes the conversion of dihydroorotate to orotate with quinone as electron acceptor. This chain is Dihydroorotate dehydrogenase (quinone), found in Dechloromonas aromatica (strain RCB).